The primary structure comprises 197 residues: Pyridoxal 5'-phosphate synthase subunit PdxT (197 aa).

Position 52–54 (52–54 (GES)) interacts with L-glutamine. Catalysis depends on C84, which acts as the Nucleophile. L-glutamine is bound by residues R116 and 143–144 (IR). Catalysis depends on charge relay system residues H179 and E181.

Belongs to the glutaminase PdxT/SNO family. In terms of assembly, in the presence of PdxS, forms a dodecamer of heterodimers. Only shows activity in the heterodimer.

The enzyme catalyses aldehydo-D-ribose 5-phosphate + D-glyceraldehyde 3-phosphate + L-glutamine = pyridoxal 5'-phosphate + L-glutamate + phosphate + 3 H2O + H(+). The catalysed reaction is L-glutamine + H2O = L-glutamate + NH4(+). It functions in the pathway cofactor biosynthesis; pyridoxal 5'-phosphate biosynthesis. Functionally, catalyzes the hydrolysis of glutamine to glutamate and ammonia as part of the biosynthesis of pyridoxal 5'-phosphate. The resulting ammonia molecule is channeled to the active site of PdxS. The polypeptide is Pyridoxal 5'-phosphate synthase subunit PdxT (Ignicoccus hospitalis (strain KIN4/I / DSM 18386 / JCM 14125)).